The chain runs to 418 residues: tRNA-2-methylthio-N(6)-dimethylallyladenosine synthase (418 aa).

Residues 1-118 (MNYLIETIGC…ALKIMNLFRT (118 aa)) form the MTTase N-terminal domain. Positions 10, 46, 80, 143, 147, and 150 each coordinate [4Fe-4S] cluster. The 228-residue stretch at 129–356 (IKSKIVRYIT…LKESNKISIE (228 aa)) folds into the Radical SAM core domain. Residues 359–418 (SEMLGSTQQVLAEEIKNGIIKARTKNGRKVFAEGRKEYIGKHINVNIKEAKINSLFGDIV) enclose the TRAM domain.

This sequence belongs to the methylthiotransferase family. MiaB subfamily. Monomer. The cofactor is [4Fe-4S] cluster.

Its subcellular location is the cytoplasm. The catalysed reaction is N(6)-dimethylallyladenosine(37) in tRNA + (sulfur carrier)-SH + AH2 + 2 S-adenosyl-L-methionine = 2-methylsulfanyl-N(6)-dimethylallyladenosine(37) in tRNA + (sulfur carrier)-H + 5'-deoxyadenosine + L-methionine + A + S-adenosyl-L-homocysteine + 2 H(+). Its function is as follows. Catalyzes the methylthiolation of N6-(dimethylallyl)adenosine (i(6)A), leading to the formation of 2-methylthio-N6-(dimethylallyl)adenosine (ms(2)i(6)A) at position 37 in tRNAs that read codons beginning with uridine. This is tRNA-2-methylthio-N(6)-dimethylallyladenosine synthase from Endomicrobium trichonymphae.